The chain runs to 426 residues: Pannexin-1 (426 aa).

Topologically, residues 1–40 (MAIAHLATEYVFSDFLLKEPTEPKFKGLRLELAVDKMVTC) are cytoplasmic. S-nitrosocysteine is present on Cys-40. Residues 41 to 61 (IAVGLPLLLISLAFAQEISIG) traverse the membrane as a helical segment. At 62-106 (TQISCFSPSSFSWRQAAFVDSYCWAAVQQKSSLQSESGNLPLWLH) the chain is on the extracellular side. Disulfide bonds link Cys-66–Cys-264 and Cys-84–Cys-245. Residues 107–127 (KFFPYILLLFAILLYLPALFW) traverse the membrane as a helical segment. The Cytoplasmic portion of the chain corresponds to 128 to 216 (RFSAAPHLCS…HLIMKYISCR (89 aa)). The residue at position 198 (Tyr-198) is a Phosphotyrosine. Residues 217-237 (LVTFVVILLACIYLSYYFSLS) form a helical membrane-spanning segment. Over 238–277 (SLSDEFLCSIKSGVLKNDSTIPDRFQCKLIAVGIFQLLSL) the chain is Extracellular. The N-linked (GlcNAc...) asparagine glycan is linked to Asn-254. The chain crosses the membrane as a helical span at residues 278 to 298 (INLIVYALLIPVVVYTFFIPF). The Cytoplasmic portion of the chain corresponds to 299–426 (RQKTDILKVY…SRQRLLNPSC (128 aa)). At Cys-346 the chain carries S-nitrosocysteine.

The protein belongs to the pannexin family. In terms of assembly, homoheptameric. Post-translationally, S-nitrosylation inhibits channel currents and ATP release. N-glycosylation may play a role in cell surface targeting. Exists in three glycosylation states: non-glycosylated (GLY0), high-mannose glycosylated (GLY1), and fully mature glycosylated (GLY2). In terms of processing, phosphorylated at Tyr-198 by SRC. Phosphorylation activates ATP release. Constitutively phosphorylated in vascular smooth muscle cells. Post-translationally, cleaved by CASP3 and CASP7 during apoptosis. Cleavage opens the channel for the release of metabolites and induces plasma membrane permeability during apoptosis. In terms of tissue distribution, widely expressed, including in cartilage, skin, spleen and brain.

Its subcellular location is the cell membrane. It localises to the endoplasmic reticulum membrane. It carries out the reaction chloride(in) = chloride(out). The catalysed reaction is iodide(out) = iodide(in). The enzyme catalyses Ca(2+)(in) = Ca(2+)(out). It catalyses the reaction ATP(in) = ATP(out). It carries out the reaction K(+)(in) = K(+)(out). The catalysed reaction is Na(+)(in) = Na(+)(out). The enzyme catalyses nitrate(in) = nitrate(out). It catalyses the reaction L-aspartate(out) = L-aspartate(in). It carries out the reaction L-glutamate(out) = L-glutamate(in). The catalysed reaction is D-gluconate(in) = D-gluconate(out). The enzyme catalyses spermidine(in) = spermidine(out). In terms of biological role, ion channel involved in a variety of physiological functions such as blood pressure regulation, apoptotic cell clearance and oogenesis. Forms anion-selective channels with relatively low conductance and an order of permeabilities: nitrate&gt;iodide&gt;chlroride&gt;&gt;aspartate=glutamate=gluconate. Can release ATP upon activation through phosphorylation or cleavage at C-terminus. May play a role as a Ca(2+)-leak channel to regulate ER Ca(2+) homeostasis. During apoptosis and after cleavage by caspases of the C-terminal tail, acts as a plasma membrane channel which mediates the regulated release of find-me signals, such as nucleotides ATP and UTP, and selective plasme membrane permeability. The protein is Pannexin-1 of Mus musculus (Mouse).